Consider the following 500-residue polypeptide: NAD(P)H-quinone oxidoreductase subunit 2 A, chloroplastic (500 aa).

13 helical membrane-spanning segments follow: residues L14–L34, I47–F67, I89–I109, M114–C134, F139–Y159, Y173–G193, P217–A237, W285–I305, M313–D333, Y344–L364, A385–F405, L408–L428, and M474–I494.

It belongs to the complex I subunit 2 family. NDH is composed of at least 16 different subunits, 5 of which are encoded in the nucleus.

The protein resides in the plastid. The protein localises to the chloroplast thylakoid membrane. It catalyses the reaction a plastoquinone + NADH + (n+1) H(+)(in) = a plastoquinol + NAD(+) + n H(+)(out). The enzyme catalyses a plastoquinone + NADPH + (n+1) H(+)(in) = a plastoquinol + NADP(+) + n H(+)(out). Functionally, NDH shuttles electrons from NAD(P)H:plastoquinone, via FMN and iron-sulfur (Fe-S) centers, to quinones in the photosynthetic chain and possibly in a chloroplast respiratory chain. The immediate electron acceptor for the enzyme in this species is believed to be plastoquinone. Couples the redox reaction to proton translocation, and thus conserves the redox energy in a proton gradient. In Pelargonium hortorum (Common geranium), this protein is NAD(P)H-quinone oxidoreductase subunit 2 A, chloroplastic.